The primary structure comprises 744 residues: Protein pthb1 homolog (744 aa).

Residues E722–E733 are compositionally biased toward basic and acidic residues. Residues E722–A744 are disordered. Positions E734–A744 are enriched in acidic residues.

As to quaternary structure, part of BBSome complex, that contains bbs-1, bbs-2, bbs-4, bbs-5, osm-12, bbs-8/ttc-8 and bbs-9. Interacts with bbs-1.

Its function is as follows. Component of the BBSome complex. The BBSome complex is thought to function as a coat complex required for sorting of specific membrane proteins to the primary cilia. The BBSome complex is required for ciliogenesis but is dispensable for centriolar satellite function. Required for proper BBSome complex assembly and its ciliary localization. Required for cilia biogenesis and both the assembly and movement of intraflagellar transport proteins along the ciliary axoneme. In ciliated sensory neurons, required for the sensation of nitric oxide and avoidance of NO-producing organisms like P.aeruginosa. This chain is Protein pthb1 homolog, found in Caenorhabditis elegans.